The sequence spans 859 residues: MINNEPFPSADSASILTTSTSNNSLMSYNHQPQLSINSVQSLLEPVTPPPLGQMNNKRNHQKAHSLDLSGFNQFISSTQSPLALMNNTSTSNSANSFSPNPNAASNSTGLSASMANPPAILPLINEFDLEMDGPRRKSSHDFTVVAPSNSGVNTSSLIMETPSSSVTPAASLRNFSNSNNAASKCGVDNSSFGLSSSTSSSMVEISALPLRDLDYIKLATDQFGCRFLQKKLETPSESNMVRDLMYEQIKPFFLDLILDPFGNYLVQKLCDYLTAEQKTLLIQTIYPNVFQISINQYGTRSLQKIIDTVDNEVQIDLIIKGFSQEFTSIEQVVTLINDLNGNHVIQKCIFKFSPSKFGFIIDAIVEQNNIITISTHKHGCCVLQKLLSVCTLQQIFKISVKIVQFLPGLINDQFGNYIIQFLLDIKELDFYLLAELFNRLSNELCQLSCLKFSSNVVEKFIKKLFRIITGFIVNNNGGASQRTAVASDDVINASMNILLTTIDIFTVNLNVLIRDNFGNYALQTLLDVKNYSPLLAYNKNSNAIGQNSSSTLNYGNFCNDFSLKIGNLIVLTKELLPSIKTTSYAKKIKLKVKAYAEATGIPFTDISPQVTAMSHNNLQTINNENKNPHNKNSHNHNHNHNHNHAHNNNNNNNQKSHTRHFSLPANAYHRRSNSSVTNNFSNQYAQDQKIHSPQQIMNFNQNAYPSMGAPSFNSQTNPPLVSHNSLQNFDNRQFANLMAHPNSAAPIHSFSSSNITNVNPNVSRGFKQPGFMMNETDKINANHFSPYSNANSQNFNESFVPRMQYQTEGANWDSSLSMKSQHIGQGPYNQVNMSRNASISNMPAMNTARTSDELQFTLP.

Positions 85 to 108 (MNNTSTSNSANSFSPNPNAASNST) are disordered. The segment covering 86–108 (NNTSTSNSANSFSPNPNAASNST) has biased composition (low complexity). One can recognise a PUM-HD domain in the interval 188 to 596 (DNSSFGLSSS…KIKLKVKAYA (409 aa)). 8 Pumilio repeats span residues 209–247 (PLRDLDYIKLATDQFGCRFLQKKLETPSESNMVRDLMYE), 248–283 (QIKPFFLDLILDPFGNYLVQKLCDYLTAEQKTLLIQ), 284–320 (TIYPNVFQISINQYGTRSLQKIIDTVDNEVQIDLIIK), 325–362 (EFTSIEQVVTLINDLNGNHVIQKCIFKFSPSKFGFIID), 363–400 (AIVEQNNIITISTHKHGCCVLQKLLSVCTLQQIFKISV), 401–438 (KIVQFLPGLINDQFGNYIIQFLLDIKELDFYLLAELFN), 439–474 (RLSNELCQLSCLKFSSNVVEKFIKKLFRIITGFIVN), and 503–539 (DIFTVNLNVLIRDNFGNYALQTLLDVKNYSPLLAYNK). The tract at residues 620 to 658 (TINNENKNPHNKNSHNHNHNHNHNHAHNNNNNNNQKSHT) is disordered. Basic residues predominate over residues 628 to 645 (PHNKNSHNHNHNHNHNHA). Phosphoserine is present on residues serine 662, serine 834, and serine 838.

Its subcellular location is the cytoplasm. RNA-binding protein involved in post-transcriptional regulation. Negatively regulates expression of HO by binding to the 3'-UTR of HO mRNA. Predominantly binds to mRNAs encoding chromatin modifiers and spindle pole body components. Recognizes and binds to 5'-TGTAA[CT]A[AT]TA-3' in the 3'-UTR of target mRNAs. Multicopy suppressor of POP2 mutation. Required for high temperature growth. This is Suppressor protein MPT5 (MPT5) from Saccharomyces cerevisiae (strain ATCC 204508 / S288c) (Baker's yeast).